We begin with the raw amino-acid sequence, 590 residues long: Aspartate--tRNA ligase (590 aa).

Glu-172 contributes to the L-aspartate binding site. Residues 196-199 are aspartate; it reads QLFK. Arg-218 provides a ligand contact to L-aspartate. ATP is bound by residues 218–220 and Gln-227; that span reads RDE. An L-aspartate-binding site is contributed by His-449. Glu-483 provides a ligand contact to ATP. Arg-490 contributes to the L-aspartate binding site. 535–538 contributes to the ATP binding site; that stretch reads GLDR.

This sequence belongs to the class-II aminoacyl-tRNA synthetase family. Type 1 subfamily. Homodimer.

The protein localises to the cytoplasm. The catalysed reaction is tRNA(Asp) + L-aspartate + ATP = L-aspartyl-tRNA(Asp) + AMP + diphosphate. Functionally, catalyzes the attachment of L-aspartate to tRNA(Asp) in a two-step reaction: L-aspartate is first activated by ATP to form Asp-AMP and then transferred to the acceptor end of tRNA(Asp). The polypeptide is Aspartate--tRNA ligase (Glaesserella parasuis serovar 5 (strain SH0165) (Haemophilus parasuis)).